The primary structure comprises 595 residues: MAATAATTFSLSSSSSTSAAASKALKQSPKPSALNLGFLGSSSTIKACRSLKAARVLPSGANGGGSALSAQMVSAPSINTPSATTFDFDSSVFKKEKVTLSGHDEYIVRGGRNLFPLLPDAFKGIKQIGVIGWGSQAPAQAQNLKDSLTEAKSDVVVKIGLRKGSNSFAEARAAGFSEENGTLGDMWETISGSDLVLLLISDSAQADNYEKVFSHMKPNSILGLSHGFLLGHLQSLGQDFPKNISVIAVCPKGMGPSVRRLYVQGKEVNGAGINSSFAVHQDVDGRATDVALGWSIALGSPFTFATTLEQEYKSDIFGERGILLGAVHGIVECLFRRYTESGMSEDLAYKNTVECITGVISKTISTKGMLALYNSLSEEGKKDFQAAYSASYYPSMDILYECYEDVASGSEIRSVVLAGRRFYEKEGLPAFPMGKIDQTRMWKVGEKVRSVRPAGDLGPLYPFTAGVYVALMMAQIEILRKKGHSYSEIINESVIEAVDSLNPFMHARGVSFMVDNCSTTARLGSRKWAPRFDYILSQQALVAVDNGAPINQDLISNFLSDPVHEAIGVCAQLRPSVDISVTADADFVRPELRQA.

A chloroplast-targeting transit peptide spans 1-72; sequence MAATAATTFS…GGGSALSAQM (72 aa). Residues 108-306 form the KARI N-terminal Rossmann domain; the sequence is VRGGRNLFPL…ALGSPFTFAT (199 aa). NADP(+)-binding positions include 129–136, 162–167, and 201–205; these read GVIGWGSQ, RKGSNS, and SDSAQ. His226 is a catalytic residue. 2 KARI C-terminal knotted domains span residues 307–455 and 456–592; these read TLEQ…RPAG and DLGP…RPEL. Asp315, Glu319, Glu492, and Glu496 together coordinate Mg(2+). Residue Ser518 coordinates substrate.

Belongs to the ketol-acid reductoisomerase family. As to quaternary structure, homodimer. It depends on Mg(2+) as a cofactor.

Its subcellular location is the plastid. The protein resides in the chloroplast. The catalysed reaction is (2R)-2,3-dihydroxy-3-methylbutanoate + NADP(+) = (2S)-2-acetolactate + NADPH + H(+). It catalyses the reaction (2R,3R)-2,3-dihydroxy-3-methylpentanoate + NADP(+) = (S)-2-ethyl-2-hydroxy-3-oxobutanoate + NADPH + H(+). It functions in the pathway amino-acid biosynthesis; L-isoleucine biosynthesis; L-isoleucine from 2-oxobutanoate: step 2/4. The protein operates within amino-acid biosynthesis; L-valine biosynthesis; L-valine from pyruvate: step 2/4. The polypeptide is Ketol-acid reductoisomerase, chloroplastic (AHRI) (Spinacia oleracea (Spinach)).